Reading from the N-terminus, the 416-residue chain is MFSRDMTIAGYDPELAAAIEDERQRQEDHIELIASENYASPRVMEAQGSVLTNKYAEGYPGKRYYGGCEHVDVAEQLAIDRAKQLFGADYANVQPHSGSQANAAVFHALLKPGDTILGMSLDHGGHLTHGAKVNFSGKLFNAVQYGINDDGQIDYDEIQRLATEHQPKMVIGGFSAYSQVVDWARLRQIADSVGAYLVVDMAHIAGLVAAGVYPSPIPHADAVTSTTHKTLRGPRGGIILARSNPDLEKKFQSLVFPGTQGGPLMHAIAGKAVAFKEALEPDFKQYQEQVVANARAMARRVIERGYNVVSGGTDNHLFLMDLTPKNLTGKDADAALGRANITVNKNTVPNDPQSPFVTSGLRIGTPAITTRGFKEAEATRLADWICDVLDNMGDESVVERVRGEVEQICREFPVYG.

Residues Leu-121 and 125 to 127 contribute to the (6S)-5,6,7,8-tetrahydrofolate site; that span reads GHL. Lys-229 is modified (N6-(pyridoxal phosphate)lysine). 354-356 provides a ligand contact to (6S)-5,6,7,8-tetrahydrofolate; the sequence is SPF.

Belongs to the SHMT family. As to quaternary structure, homodimer. It depends on pyridoxal 5'-phosphate as a cofactor.

The protein localises to the cytoplasm. It carries out the reaction (6R)-5,10-methylene-5,6,7,8-tetrahydrofolate + glycine + H2O = (6S)-5,6,7,8-tetrahydrofolate + L-serine. It participates in one-carbon metabolism; tetrahydrofolate interconversion. Its pathway is amino-acid biosynthesis; glycine biosynthesis; glycine from L-serine: step 1/1. Functionally, catalyzes the reversible interconversion of serine and glycine with tetrahydrofolate (THF) serving as the one-carbon carrier. This reaction serves as the major source of one-carbon groups required for the biosynthesis of purines, thymidylate, methionine, and other important biomolecules. Also exhibits THF-independent aldolase activity toward beta-hydroxyamino acids, producing glycine and aldehydes, via a retro-aldol mechanism. In Halorhodospira halophila (strain DSM 244 / SL1) (Ectothiorhodospira halophila (strain DSM 244 / SL1)), this protein is Serine hydroxymethyltransferase.